Consider the following 177-residue polypeptide: Ribosome maturation factor RimP (177 aa).

The protein belongs to the RimP family.

Its subcellular location is the cytoplasm. Required for maturation of 30S ribosomal subunits. The sequence is that of Ribosome maturation factor RimP from Streptococcus sanguinis (strain SK36).